A 235-amino-acid chain; its full sequence is Large ribosomal subunit protein uL1 (235 aa).

Belongs to the universal ribosomal protein uL1 family. In terms of assembly, part of the 50S ribosomal subunit.

Its function is as follows. Binds directly to 23S rRNA. The L1 stalk is quite mobile in the ribosome, and is involved in E site tRNA release. Protein L1 is also a translational repressor protein, it controls the translation of the L11 operon by binding to its mRNA. The sequence is that of Large ribosomal subunit protein uL1 from Mycobacteroides abscessus (strain ATCC 19977 / DSM 44196 / CCUG 20993 / CIP 104536 / JCM 13569 / NCTC 13031 / TMC 1543 / L948) (Mycobacterium abscessus).